An 84-amino-acid polypeptide reads, in one-letter code: Exodeoxyribonuclease 7 small subunit (84 aa).

The protein belongs to the XseB family. In terms of assembly, heterooligomer composed of large and small subunits.

Its subcellular location is the cytoplasm. The catalysed reaction is Exonucleolytic cleavage in either 5'- to 3'- or 3'- to 5'-direction to yield nucleoside 5'-phosphates.. In terms of biological role, bidirectionally degrades single-stranded DNA into large acid-insoluble oligonucleotides, which are then degraded further into small acid-soluble oligonucleotides. The sequence is that of Exodeoxyribonuclease 7 small subunit from Bartonella bacilliformis (strain ATCC 35685 / KC583 / Herrer 020/F12,63).